Here is a 225-residue protein sequence, read N- to C-terminus: Prolactin (225 aa).

An N-terminal signal peptide occupies residues 1–28 (MTIQGSDRKGTLLLLVMSNLLFCQNVHP). Cysteine 32 and cysteine 37 are joined by a disulfide. Residues serine 52 and serine 116 each carry the phosphoserine modification. 2 disulfide bridges follow: cysteine 84-cysteine 200 and cysteine 217-cysteine 225.

This sequence belongs to the somatotropin/prolactin family. In terms of assembly, interacts with PRLR.

The protein resides in the secreted. In terms of biological role, prolactin acts primarily on the mammary gland by promoting lactation. This Alexandromys montebelli (Japanese grass vole) protein is Prolactin (PRL).